We begin with the raw amino-acid sequence, 177 residues long: ATP synthase subunit delta (177 aa).

Belongs to the ATPase delta chain family. In terms of assembly, F-type ATPases have 2 components, F(1) - the catalytic core - and F(0) - the membrane proton channel. F(1) has five subunits: alpha(3), beta(3), gamma(1), delta(1), epsilon(1). F(0) has three main subunits: a(1), b(2) and c(10-14). The alpha and beta chains form an alternating ring which encloses part of the gamma chain. F(1) is attached to F(0) by a central stalk formed by the gamma and epsilon chains, while a peripheral stalk is formed by the delta and b chains.

The protein resides in the cell inner membrane. Its function is as follows. F(1)F(0) ATP synthase produces ATP from ADP in the presence of a proton or sodium gradient. F-type ATPases consist of two structural domains, F(1) containing the extramembraneous catalytic core and F(0) containing the membrane proton channel, linked together by a central stalk and a peripheral stalk. During catalysis, ATP synthesis in the catalytic domain of F(1) is coupled via a rotary mechanism of the central stalk subunits to proton translocation. Functionally, this protein is part of the stalk that links CF(0) to CF(1). It either transmits conformational changes from CF(0) to CF(1) or is implicated in proton conduction. The sequence is that of ATP synthase subunit delta from Psychromonas ingrahamii (strain DSM 17664 / CCUG 51855 / 37).